The chain runs to 213 residues: Methylthioribulose-1-phosphate dehydratase (213 aa).

Residues H97 and H99 each coordinate Zn(2+).

It belongs to the aldolase class II family. MtnB subfamily. Homotetramer. Zn(2+) is required as a cofactor.

The catalysed reaction is 5-(methylsulfanyl)-D-ribulose 1-phosphate = 5-methylsulfanyl-2,3-dioxopentyl phosphate + H2O. The protein operates within amino-acid biosynthesis; L-methionine biosynthesis via salvage pathway; L-methionine from S-methyl-5-thio-alpha-D-ribose 1-phosphate: step 2/6. Functionally, catalyzes the dehydration of methylthioribulose-1-phosphate (MTRu-1-P) into 2,3-diketo-5-methylthiopentyl-1-phosphate (DK-MTP-1-P). This Geobacillus sp. (strain WCH70) protein is Methylthioribulose-1-phosphate dehydratase.